The sequence spans 170 residues: 3-hydroxydecanoyl-[acyl-carrier-protein] dehydratase (170 aa).

Residue H69 is part of the active site.

The protein belongs to the thioester dehydratase family. FabA subfamily. Homodimer.

Its subcellular location is the cytoplasm. It catalyses the reaction a (3R)-hydroxyacyl-[ACP] = a (2E)-enoyl-[ACP] + H2O. It carries out the reaction (3R)-hydroxydecanoyl-[ACP] = (2E)-decenoyl-[ACP] + H2O. The catalysed reaction is (2E)-decenoyl-[ACP] = (3Z)-decenoyl-[ACP]. The protein operates within lipid metabolism; fatty acid biosynthesis. In terms of biological role, necessary for the introduction of cis unsaturation into fatty acids. Catalyzes the dehydration of (3R)-3-hydroxydecanoyl-ACP to E-(2)-decenoyl-ACP and then its isomerization to Z-(3)-decenoyl-ACP. Can catalyze the dehydratase reaction for beta-hydroxyacyl-ACPs with saturated chain lengths up to 16:0, being most active on intermediate chain length. The chain is 3-hydroxydecanoyl-[acyl-carrier-protein] dehydratase from Idiomarina loihiensis (strain ATCC BAA-735 / DSM 15497 / L2-TR).